The primary structure comprises 113 residues: uncharacterized protein (113 aa).

Transmembrane regions (helical) follow at residues 25-45 (FGFCYFLFLISFIMCIVCFII) and 49-69 (FEVEIILVILFPFLLLILSVW).

Its subcellular location is the host membrane. This is an uncharacterized protein from Spiroplasma citri (SpV1).